Here is a 208-residue protein sequence, read N- to C-terminus: TnpB-like protein MJ0012 (208 aa).

Zn(2+) contacts are provided by Cys83, Cys86, Cys100, and Cys103.

Belongs to the transposase 35 family.

In Methanocaldococcus jannaschii (strain ATCC 43067 / DSM 2661 / JAL-1 / JCM 10045 / NBRC 100440) (Methanococcus jannaschii), this protein is TnpB-like protein MJ0012.